The sequence spans 45 residues: Large ribosomal subunit protein bL34 (45 aa).

It belongs to the bacterial ribosomal protein bL34 family.

The sequence is that of Large ribosomal subunit protein bL34 from Kineococcus radiotolerans (strain ATCC BAA-149 / DSM 14245 / SRS30216).